The primary structure comprises 199 residues: Imidazoleglycerol-phosphate dehydratase (199 aa).

This sequence belongs to the imidazoleglycerol-phosphate dehydratase family.

Its subcellular location is the cytoplasm. The enzyme catalyses D-erythro-1-(imidazol-4-yl)glycerol 3-phosphate = 3-(imidazol-4-yl)-2-oxopropyl phosphate + H2O. The protein operates within amino-acid biosynthesis; L-histidine biosynthesis; L-histidine from 5-phospho-alpha-D-ribose 1-diphosphate: step 6/9. This is Imidazoleglycerol-phosphate dehydratase from Rhodospirillum rubrum (strain ATCC 11170 / ATH 1.1.1 / DSM 467 / LMG 4362 / NCIMB 8255 / S1).